A 361-amino-acid chain; its full sequence is S-adenosylmethionine:tRNA ribosyltransferase-isomerase (361 aa).

This sequence belongs to the QueA family. In terms of assembly, monomer.

The protein localises to the cytoplasm. It carries out the reaction 7-aminomethyl-7-carbaguanosine(34) in tRNA + S-adenosyl-L-methionine = epoxyqueuosine(34) in tRNA + adenine + L-methionine + 2 H(+). It functions in the pathway tRNA modification; tRNA-queuosine biosynthesis. Transfers and isomerizes the ribose moiety from AdoMet to the 7-aminomethyl group of 7-deazaguanine (preQ1-tRNA) to give epoxyqueuosine (oQ-tRNA). The polypeptide is S-adenosylmethionine:tRNA ribosyltransferase-isomerase (Actinobacillus pleuropneumoniae serotype 5b (strain L20)).